We begin with the raw amino-acid sequence, 260 residues long: Snake venom serine protease homolog (260 aa).

An N-terminal signal peptide occupies residues 1-18; it reads MVLVRVLANLLMLQLSYA. A propeptide spanning residues 19–24 is cleaved from the precursor; the sequence is QKSSEL. One can recognise a Peptidase S1 domain in the interval 25 to 251; it reads IIGGDECNIN…HLNWIQSIIA (227 aa). 6 cysteine pairs are disulfide-bonded: C31–C165, C52–C68, C100–C258, C144–C212, C176–C191, and C202–C227. 2 N-linked (GlcNAc...) asparagine glycosylation sites follow: N123 and N124. N-linked (GlcNAc...) asparagine glycosylation occurs at N253.

It belongs to the peptidase S1 family. Snake venom subfamily. In terms of tissue distribution, expressed by the venom gland.

The protein resides in the secreted. Its function is as follows. Snake venom serine protease homolog that may act in the hemostasis system of the prey. This Protobothrops jerdonii (Jerdon's pitviper) protein is Snake venom serine protease homolog.